A 362-amino-acid polypeptide reads, in one-letter code: C-C chemokine receptor type 10 (362 aa).

The Extracellular segment spans residues 1 to 48 (MGTKPTEQVSWGLYSGYDEEAYSVGPLPELCYKADVQAFSRAFQPSVS). Residues 49-69 (LMVAVLGLAGNGLVLATHLAA) form a helical membrane-spanning segment. Residues 70–80 (RRTTRSPTSVH) are Cytoplasmic-facing. The chain crosses the membrane as a helical span at residues 81–101 (LLQLALADLLLALTLPFAAAG). Topologically, residues 102–115 (ALQGWNLGSTTCRA) are extracellular. An intrachain disulfide couples Cys-113 to Cys-191. Residues 116–136 (ISGLYSASFHAGFLFLACISA) traverse the membrane as a helical segment. Topologically, residues 137–159 (DRYVAIARALPAGQRPSTPSRAH) are cytoplasmic. Residues 160-180 (LVSVFVWLLSLFLALPALLFS) traverse the membrane as a helical segment. The Extracellular segment spans residues 181–208 (RDGPREGQRRCRLIFPESLTQTVKGASA). The chain crosses the membrane as a helical span at residues 209 to 229 (VAQVVLGFALPLGVMAACYAL). Topologically, residues 230–247 (LGRTLLAARGPERRRALR) are cytoplasmic. The helical transmembrane segment at 248-268 (VVVALVVAFVVLQLPYSLALL) threads the bilayer. The Extracellular segment spans residues 269–291 (LDTADLLAARERSCSSSKRKDLA). Residues 292-312 (LLVTGGLTLVRCSLNPVLYAF) traverse the membrane as a helical segment. Residues 313 to 362 (LGLRFRRDLRRLLQGGGCSPKPNPRGRCPRRLRLSSCSAPTETHSLSWDN) are Cytoplasmic-facing.

This sequence belongs to the G-protein coupled receptor 1 family. In terms of tissue distribution, expressed at high levels in small intestine, colon, lymph nodes, Peyer patches and at lower levels in thymus, lung and spleen.

It is found in the cell membrane. Functionally, receptor for chemokines SCYA27 and SCYA28. Subsequently transduces a signal by increasing the intracellular calcium ions level. In Mus musculus (Mouse), this protein is C-C chemokine receptor type 10 (Ccr10).